The chain runs to 2939 residues: Serine/threonine-protein kinase tel1 (2939 aa).

Disordered stretches follow at residues 193-212, 695-718, and 859-886; these read GTSV…RAGS, PPED…AADS, and KTRR…ETRK. The segment covering 697-715 has biased composition (basic and acidic residues); sequence EDSHKATSTDQPKREEIRA. One can recognise an FAT domain in the interval 1869–2471; it reads IAAAAATRCG…MYQIWSGVKA (603 aa). In terms of domain architecture, PI3K/PI4K catalytic spans 2577–2890; it reads FEPQMSIASG…DKKSTKNLNE (314 aa). The tract at residues 2583–2589 is G-loop; sequence IASGVSA. Residues 2755–2763 form a catalytic loop region; that stretch reads GLGDRHGHN. The interval 2775-2799 is activation loop; that stretch reads HIDLGVAFELGRILPVPELVPFRLT. Positions 2869–2894 are disordered; the sequence is DVVEAEDERRAGDKKSTKNLNEPSEA. A compositionally biased stretch (basic and acidic residues) spans 2875–2884; the sequence is DERRAGDKKS. The region spanning 2907–2939 is the FATC domain; that stretch reads KTLSVMATVNDLINQATDERNLAVLFCGWAAYA.

It belongs to the PI3/PI4-kinase family. ATM subfamily. Associates with DNA double-strand breaks.

The protein resides in the nucleus. It localises to the chromosome. It is found in the telomere. The enzyme catalyses L-seryl-[protein] + ATP = O-phospho-L-seryl-[protein] + ADP + H(+). The catalysed reaction is L-threonyl-[protein] + ATP = O-phospho-L-threonyl-[protein] + ADP + H(+). Serine/threonine protein kinase which activates checkpoint signaling upon genotoxic stresses such as ionizing radiation (IR), ultraviolet light (UV), or DNA replication stalling, thereby acting as a DNA damage sensor. Recognizes the substrate consensus sequence [ST]-Q. Phosphorylates histone H2A to form H2AS128ph (gamma-H2A) at sites of DNA damage, involved in the regulation of DNA damage response mechanism. Required for the control of telomere length and genome stability. The protein is Serine/threonine-protein kinase tel1 (mus-21) of Neurospora crassa (strain ATCC 24698 / 74-OR23-1A / CBS 708.71 / DSM 1257 / FGSC 987).